We begin with the raw amino-acid sequence, 355 residues long: Elongation factor Ts (355 aa).

Positions 82 to 85 (TDFV) are involved in Mg(2+) ion dislocation from EF-Tu.

Belongs to the EF-Ts family.

The protein resides in the cytoplasm. In terms of biological role, associates with the EF-Tu.GDP complex and induces the exchange of GDP to GTP. It remains bound to the aminoacyl-tRNA.EF-Tu.GTP complex up to the GTP hydrolysis stage on the ribosome. This chain is Elongation factor Ts, found in Helicobacter pylori (strain P12).